A 321-amino-acid polypeptide reads, in one-letter code: Putative glucan endo-1,3-beta-glucosidase GVI (321 aa).

The first 6 residues, 1–6 (LAGVEG), serve as a signal peptide directing secretion. Catalysis depends on Glu-100, which acts as the Proton donor. Glu-241 serves as the catalytic Nucleophile.

Belongs to the glycosyl hydrolase 17 family.

The enzyme catalyses Hydrolysis of (1-&gt;3)-beta-D-glucosidic linkages in (1-&gt;3)-beta-D-glucans.. Its function is as follows. May provide a degree of protection against microbial invasion of germinated barley grain through its ability to degrade fungal cell wall polysaccharides. The polypeptide is Putative glucan endo-1,3-beta-glucosidase GVI (Hordeum vulgare (Barley)).